Consider the following 96-residue polypeptide: Glutamyl-tRNA(Gln) amidotransferase subunit C (96 aa).

The protein belongs to the GatC family. As to quaternary structure, heterotrimer of A, B and C subunits.

It carries out the reaction L-glutamyl-tRNA(Gln) + L-glutamine + ATP + H2O = L-glutaminyl-tRNA(Gln) + L-glutamate + ADP + phosphate + H(+). The enzyme catalyses L-aspartyl-tRNA(Asn) + L-glutamine + ATP + H2O = L-asparaginyl-tRNA(Asn) + L-glutamate + ADP + phosphate + 2 H(+). In terms of biological role, allows the formation of correctly charged Asn-tRNA(Asn) or Gln-tRNA(Gln) through the transamidation of misacylated Asp-tRNA(Asn) or Glu-tRNA(Gln) in organisms which lack either or both of asparaginyl-tRNA or glutaminyl-tRNA synthetases. The reaction takes place in the presence of glutamine and ATP through an activated phospho-Asp-tRNA(Asn) or phospho-Glu-tRNA(Gln). The polypeptide is Glutamyl-tRNA(Gln) amidotransferase subunit C (Pseudomonas aeruginosa (strain ATCC 15692 / DSM 22644 / CIP 104116 / JCM 14847 / LMG 12228 / 1C / PRS 101 / PAO1)).